A 141-amino-acid polypeptide reads, in one-letter code: Galactose-6-phosphate isomerase subunit LacA 1 (141 aa).

Belongs to the LacAB/RpiB family. Heteromultimeric protein consisting of LacA and LacB.

The enzyme catalyses aldehydo-D-galactose 6-phosphate = keto-D-tagatose 6-phosphate. It functions in the pathway carbohydrate metabolism; D-galactose 6-phosphate degradation; D-tagatose 6-phosphate from D-galactose 6-phosphate: step 1/1. The sequence is that of Galactose-6-phosphate isomerase subunit LacA 1 from Streptococcus pyogenes serotype M3 (strain SSI-1).